The chain runs to 448 residues: Phosphoglucosamine mutase (448 aa).

Ser-89 serves as the catalytic Phosphoserine intermediate. The Mg(2+) site is built by Ser-89, Asp-232, Asp-234, and Asp-236. Ser-89 carries the post-translational modification Phosphoserine.

The protein belongs to the phosphohexose mutase family. In terms of assembly, forms large aggregates. Mg(2+) is required as a cofactor. In terms of processing, activated by phosphorylation.

The enzyme catalyses alpha-D-glucosamine 1-phosphate = D-glucosamine 6-phosphate. Its function is as follows. Catalyzes the conversion of glucosamine-6-phosphate to glucosamine-1-phosphate. The polypeptide is Phosphoglucosamine mutase (glmM) (Methanocaldococcus jannaschii (strain ATCC 43067 / DSM 2661 / JAL-1 / JCM 10045 / NBRC 100440) (Methanococcus jannaschii)).